The sequence spans 788 residues: MTIYQFLRLFVLWACLPHFCCPELTFRRTPGIQQMTAESRAPRSDGKILHRQKRGWMWNQFFLLEEYTGSDYQYVGKLHSDQDKGDGSLKYILSGDGAGTLFIIDEKTGDIHATRRIDREEKAFYTLRAQAINRRTLRPVEPESEFVIKIHDINDNEPTFPEEIYTASVPEMSVVGTSVVQVTATDADDPSYGNSARVIYSILQGQPYFSVEPETGIIRTALPNMNRENKEQYQVVIQAKDMGGQMGGLSGTTTVNITLTDVNDNPPRFPQNTIHLRVLESSPVGTAVGSVKATDADTGKNAEVDYRIIDGDGTDMFDIITEKDTQEGIITVKKPLDYENRRLYTLKVEAENTHVDPRFYYLGPFKDTTIVKISIEDVDEPPVFSRSSYLFEVHEDIEVGTIIGTVMARDPDSTSSPIRFTLDRHTDLDRIFNIHSGNGSLYTSKPLDRELSQWHNLTVIAAEINNPKETTRVSVFVRILDVNDNAPQFAVFYDTFVCENARPGQLIQTISAVDKDDPLGGQKFFFSLAAVNPNFTVQDNEDNTARILTRKNGFNRHEISTYLLPVVISDNDYPIQSSTGTLTIRVCACDSQGNMQSCSAEALLLPAGLSTGALIAILLCIIILLVIVVLFAALKRQRKKEPLILSKEDIRDNIVSYNDEGGGEEDTQAFDIGTLRNPAAIEEKKLRRDIIPETLFIPRRTPTAPDNTDVRDFINERLKEHDLDPTAPPYDSLATYAYEGNDSVAESLSSLESGTTEGDQNYDYLREWGPRFNKLAEMYGGGESDKDA.

The N-terminal stretch at methionine 1–proline 22 is a signal peptide. Residues glutamate 23–arginine 54 constitute a propeptide that is removed on maturation. At glutamate 23–alanine 613 the chain is on the extracellular side. Cadherin domains are found at residues tryptophan 56 to phenylalanine 160, proline 161 to phenylalanine 269, proline 270 to phenylalanine 384, serine 385 to phenylalanine 489, and phenylalanine 489 to leucine 603. Asparagine 256 carries an N-linked (GlcNAc...) asparagine glycan. N-linked (GlcNAc...) asparagine glycosylation is found at asparagine 456 and asparagine 534. Residues leucine 614–leucine 634 traverse the membrane as a helical segment. Over lysine 635–alanine 788 the chain is Cytoplasmic. Serine 784 bears the Phosphoserine mark.

It is found in the cell membrane. Its function is as follows. Cadherins are calcium-dependent cell adhesion proteins. They preferentially interact with themselves in a homophilic manner in connecting cells; cadherins may thus contribute to the sorting of heterogeneous cell types. The chain is Cadherin-10 (Cdh10) from Mus musculus (Mouse).